The sequence spans 155 residues: D-aminoacyl-tRNA deacylase (155 aa).

Positions 137–138 (GP) match the Gly-cisPro motif, important for rejection of L-amino acids motif.

The protein belongs to the DTD family. As to quaternary structure, homodimer.

Its subcellular location is the cytoplasm. It catalyses the reaction glycyl-tRNA(Ala) + H2O = tRNA(Ala) + glycine + H(+). The catalysed reaction is a D-aminoacyl-tRNA + H2O = a tRNA + a D-alpha-amino acid + H(+). In terms of biological role, an aminoacyl-tRNA editing enzyme that deacylates mischarged D-aminoacyl-tRNAs. Also deacylates mischarged glycyl-tRNA(Ala), protecting cells against glycine mischarging by AlaRS. Acts via tRNA-based rather than protein-based catalysis; rejects L-amino acids rather than detecting D-amino acids in the active site. By recycling D-aminoacyl-tRNA to D-amino acids and free tRNA molecules, this enzyme counteracts the toxicity associated with the formation of D-aminoacyl-tRNA entities in vivo and helps enforce protein L-homochirality. The polypeptide is D-aminoacyl-tRNA deacylase (Paracidovorax citrulli (strain AAC00-1) (Acidovorax citrulli)).